We begin with the raw amino-acid sequence, 660 residues long: Bifunctional polymyxin resistance protein ArnA (660 aa).

Residues 1–304 form a formyltransferase ArnAFT region; sequence MKAVIFAYHD…TLGLVAGARL (304 aa). The active-site Proton donor; for formyltransferase activity is the His-104. (6R)-10-formyltetrahydrofolate contacts are provided by residues Arg-114 and 136–140; that span reads VKRAD. The tract at residues 314 to 660 is dehydrogenase ArnADH; that stretch reads RRIRVLILGV…RSVDVAERAS (347 aa). NAD(+) contacts are provided by residues Asp-347 and 368-369; that span reads DI. UDP-alpha-D-glucuronate contacts are provided by residues Ala-393, Tyr-398, and 432–433; that span reads TS. Glu-434 (proton acceptor; for decarboxylase activity) is an active-site residue. UDP-alpha-D-glucuronate contacts are provided by residues Arg-460, Asn-492, 526–535, and Tyr-613; that span reads KLIDGGQQKR. Arg-619 functions as the Proton donor; for decarboxylase activity in the catalytic mechanism.

This sequence in the N-terminal section; belongs to the Fmt family. UDP-L-Ara4N formyltransferase subfamily. It in the C-terminal section; belongs to the NAD(P)-dependent epimerase/dehydratase family. UDP-glucuronic acid decarboxylase subfamily. As to quaternary structure, homohexamer, formed by a dimer of trimers.

The catalysed reaction is UDP-alpha-D-glucuronate + NAD(+) = UDP-beta-L-threo-pentopyranos-4-ulose + CO2 + NADH. It catalyses the reaction UDP-4-amino-4-deoxy-beta-L-arabinose + (6R)-10-formyltetrahydrofolate = UDP-4-deoxy-4-formamido-beta-L-arabinose + (6S)-5,6,7,8-tetrahydrofolate + H(+). It participates in nucleotide-sugar biosynthesis; UDP-4-deoxy-4-formamido-beta-L-arabinose biosynthesis; UDP-4-deoxy-4-formamido-beta-L-arabinose from UDP-alpha-D-glucuronate: step 1/3. The protein operates within nucleotide-sugar biosynthesis; UDP-4-deoxy-4-formamido-beta-L-arabinose biosynthesis; UDP-4-deoxy-4-formamido-beta-L-arabinose from UDP-alpha-D-glucuronate: step 3/3. Its pathway is bacterial outer membrane biogenesis; lipopolysaccharide biosynthesis. Its function is as follows. Bifunctional enzyme that catalyzes the oxidative decarboxylation of UDP-glucuronic acid (UDP-GlcUA) to UDP-4-keto-arabinose (UDP-Ara4O) and the addition of a formyl group to UDP-4-amino-4-deoxy-L-arabinose (UDP-L-Ara4N) to form UDP-L-4-formamido-arabinose (UDP-L-Ara4FN). The modified arabinose is attached to lipid A and is required for resistance to polymyxin and cationic antimicrobial peptides. The protein is Bifunctional polymyxin resistance protein ArnA of Salmonella paratyphi C (strain RKS4594).